The sequence spans 234 residues: Glucosamine-6-phosphate deaminase (234 aa).

Asp62 (proton acceptor; for enolization step) is an active-site residue. Asn128 serves as the catalytic For ring-opening step. His130 functions as the Proton acceptor; for ring-opening step in the catalytic mechanism. Residue Glu135 is the For ring-opening step of the active site.

The protein belongs to the glucosamine/galactosamine-6-phosphate isomerase family. NagB subfamily.

The enzyme catalyses alpha-D-glucosamine 6-phosphate + H2O = beta-D-fructose 6-phosphate + NH4(+). It participates in amino-sugar metabolism; N-acetylneuraminate degradation; D-fructose 6-phosphate from N-acetylneuraminate: step 5/5. Its function is as follows. Catalyzes the reversible isomerization-deamination of glucosamine 6-phosphate (GlcN6P) to form fructose 6-phosphate (Fru6P) and ammonium ion. The protein is Glucosamine-6-phosphate deaminase of Streptococcus equi subsp. equi (strain 4047).